Here is a 213-residue protein sequence, read N- to C-terminus: Regulatory protein RecX (213 aa).

It belongs to the RecX family.

The protein localises to the cytoplasm. Modulates RecA activity. In Clostridium beijerinckii (strain ATCC 51743 / NCIMB 8052) (Clostridium acetobutylicum), this protein is Regulatory protein RecX.